The sequence spans 132 residues: uncharacterized protein (132 aa).

Transmembrane regions (helical) follow at residues 19–39, 58–78, and 93–113; these read FTWI…FIFL, IGLR…VAVM, and LIAY…CAAL.

The protein belongs to the bacteriophage holin family. Cp-1 holin subfamily.

The protein localises to the cell membrane. This is an uncharacterized protein from Clostridium perfringens.